Consider the following 222-residue polypeptide: Endonuclease V (222 aa).

Mg(2+)-binding residues include Asp43 and Asp109.

This sequence belongs to the endonuclease V family. It depends on Mg(2+) as a cofactor.

The protein localises to the cytoplasm. The catalysed reaction is Endonucleolytic cleavage at apurinic or apyrimidinic sites to products with a 5'-phosphate.. DNA repair enzyme involved in the repair of deaminated bases. Selectively cleaves double-stranded DNA at the second phosphodiester bond 3' to a deoxyinosine leaving behind the intact lesion on the nicked DNA. In Roseiflexus sp. (strain RS-1), this protein is Endonuclease V.